The following is a 701-amino-acid chain: Polyribonucleotide nucleotidyltransferase (701 aa).

Mg(2+) contacts are provided by Asp-487 and Asp-493. The region spanning 554–613 (PTMIAMKIDTDKIRDVIGKGGATIRAICEETKASIDIEDDGSIKIFGESKEAAEAARQRV) is the KH domain. In terms of domain architecture, S1 motif spans 623–691 (GKIYLGKVER…NRGRIKLSIK (69 aa)).

This sequence belongs to the polyribonucleotide nucleotidyltransferase family. Component of the RNA degradosome, which is a multiprotein complex involved in RNA processing and mRNA degradation. It depends on Mg(2+) as a cofactor.

It localises to the cytoplasm. The catalysed reaction is RNA(n+1) + phosphate = RNA(n) + a ribonucleoside 5'-diphosphate. In terms of biological role, involved in mRNA degradation. Catalyzes the phosphorolysis of single-stranded polyribonucleotides processively in the 3'- to 5'-direction. The protein is Polyribonucleotide nucleotidyltransferase of Pseudomonas syringae pv. tomato (strain ATCC BAA-871 / DC3000).